Consider the following 198-residue polypeptide: Putative 3-methyladenine DNA glycosylase (198 aa).

The protein belongs to the DNA glycosylase MPG family.

The sequence is that of Putative 3-methyladenine DNA glycosylase from Oceanobacillus iheyensis (strain DSM 14371 / CIP 107618 / JCM 11309 / KCTC 3954 / HTE831).